A 569-amino-acid polypeptide reads, in one-letter code: Proline--tRNA ligase (569 aa).

The protein belongs to the class-II aminoacyl-tRNA synthetase family. ProS type 1 subfamily. In terms of assembly, homodimer.

It is found in the cytoplasm. It catalyses the reaction tRNA(Pro) + L-proline + ATP = L-prolyl-tRNA(Pro) + AMP + diphosphate. In terms of biological role, catalyzes the attachment of proline to tRNA(Pro) in a two-step reaction: proline is first activated by ATP to form Pro-AMP and then transferred to the acceptor end of tRNA(Pro). As ProRS can inadvertently accommodate and process non-cognate amino acids such as alanine and cysteine, to avoid such errors it has two additional distinct editing activities against alanine. One activity is designated as 'pretransfer' editing and involves the tRNA(Pro)-independent hydrolysis of activated Ala-AMP. The other activity is designated 'posttransfer' editing and involves deacylation of mischarged Ala-tRNA(Pro). The misacylated Cys-tRNA(Pro) is not edited by ProRS. The polypeptide is Proline--tRNA ligase (Levilactobacillus brevis (strain ATCC 367 / BCRC 12310 / CIP 105137 / JCM 1170 / LMG 11437 / NCIMB 947 / NCTC 947) (Lactobacillus brevis)).